A 521-amino-acid polypeptide reads, in one-letter code: Citrinin biosynthesis cluster MFS transporter ctnC (521 aa).

The interval 1–29 (MKEEIDAPVSTDASGTDLENARDQPSGEK) is disordered. Transmembrane regions (helical) follow at residues 58-78 (SLITCIFSTLTIWVTFSSSVF), 95-115 (VMTLGTSLTVLGFTVGPLVWG), 124-144 (LKPLYIGYAIFIIFQVPVAVA), 155-175 (FFLGFFGTSALAIIPGALADF), 182-202 (AIAISLFSAATFVGPIFGPIM), 237-257 (WTAWITMIPASFFGIIAFLTL), 313-333 (ILVCMTIYISLIYGILYLFFV), and 349-369 (GIAALPFLGILVGVLMGCLLV). An N-linked (GlcNAc...) asparagine glycan is attached at Asn383. The next 4 helical transmembrane spans lie at 392 to 412 (LPPMIVAAILLPIGLFWFGWT), 417 to 437 (ISWAPQAIAGAPIGMGILMIW), 465 to 485 (AVSAAFPLFATAMYHKLGVDW), and 489 to 509 (LLGFLSIAMIPIPVIFYFYGA).

This sequence belongs to the major facilitator superfamily. CAR1 family.

It localises to the membrane. Its function is as follows. MFS transporter; part of the gene cluster that mediates the biosynthesis the mycotoxin citrinin, a hepato-nephrotoxic compound to humans due to inhibition of respiration complex III. This Monascus purpureus (Red mold) protein is Citrinin biosynthesis cluster MFS transporter ctnC (ctnC).